Reading from the N-terminus, the 213-residue chain is Thiamine-phosphate synthase (213 aa).

Residues 40–44 (QFREK) and N75 contribute to the 4-amino-2-methyl-5-(diphosphooxymethyl)pyrimidine site. Mg(2+) contacts are provided by D76 and D95. S113 is a binding site for 4-amino-2-methyl-5-(diphosphooxymethyl)pyrimidine. 139–141 (TPS) is a binding site for 2-[(2R,5Z)-2-carboxy-4-methylthiazol-5(2H)-ylidene]ethyl phosphate. K142 contributes to the 4-amino-2-methyl-5-(diphosphooxymethyl)pyrimidine binding site. Residues G171 and 191–192 (IS) contribute to the 2-[(2R,5Z)-2-carboxy-4-methylthiazol-5(2H)-ylidene]ethyl phosphate site.

This sequence belongs to the thiamine-phosphate synthase family. Mg(2+) serves as cofactor.

It carries out the reaction 2-[(2R,5Z)-2-carboxy-4-methylthiazol-5(2H)-ylidene]ethyl phosphate + 4-amino-2-methyl-5-(diphosphooxymethyl)pyrimidine + 2 H(+) = thiamine phosphate + CO2 + diphosphate. It catalyses the reaction 2-(2-carboxy-4-methylthiazol-5-yl)ethyl phosphate + 4-amino-2-methyl-5-(diphosphooxymethyl)pyrimidine + 2 H(+) = thiamine phosphate + CO2 + diphosphate. The enzyme catalyses 4-methyl-5-(2-phosphooxyethyl)-thiazole + 4-amino-2-methyl-5-(diphosphooxymethyl)pyrimidine + H(+) = thiamine phosphate + diphosphate. It functions in the pathway cofactor biosynthesis; thiamine diphosphate biosynthesis; thiamine phosphate from 4-amino-2-methyl-5-diphosphomethylpyrimidine and 4-methyl-5-(2-phosphoethyl)-thiazole: step 1/1. Its function is as follows. Condenses 4-methyl-5-(beta-hydroxyethyl)thiazole monophosphate (THZ-P) and 2-methyl-4-amino-5-hydroxymethyl pyrimidine pyrophosphate (HMP-PP) to form thiamine monophosphate (TMP). The sequence is that of Thiamine-phosphate synthase from Staphylococcus aureus (strain JH1).